The primary structure comprises 409 residues: Beta-arrestin-2 (409 aa).

Tyrosine 48 is subject to Phosphotyrosine. 2 positions are modified to hydroxyproline; by PHD2: proline 176 and proline 181. An interaction with TRAF6 region spans residues 240 to 409; that stretch reads ADICLFSTAQ…KDDDYDDQLC (170 aa). Serine 360 carries the post-translational modification Phosphoserine. Residues 363–409 are interaction with AP2B1; the sequence is PETDVPVDTNLIEFDTNYATDDDIVFEDFARLRLKGMKDDDYDDQLC. Threonine 382 carries the phosphothreonine modification. Residues 385-395 carry the [DE]-X(1,2)-F-X-X-[FL]-X-X-X-R motif motif; it reads DIVFEDFARLR.

This sequence belongs to the arrestin family. Homooligomer; the self-association is mediated by InsP6-binding. Heterooligomer with ARRB1; the association is mediated by InsP6-binding. Interacts with ADRB2 and CHRM2. Interacts with PDE4A. Interacts with PDE4D. Interacts with MAPK10, MAPK1 and MAPK3. Interacts with DRD2. Interacts with FSHR. Interacts with CLTC. Interacts with HTR2C. Interacts with CCR5. Interacts with CXCR4. Interacts with SRC. Interacts with DUSP16; the interaction is interrupted by stimulation of AGTR1 and activation of MAPK10. Interacts with CHUK; the interaction is enhanced stimulation of ADRB2. Interacts with RELA. Interacts with MDM2; the interaction is enhanced by activation of GPCRs. Interacts with SLC9A5. Interacts with TRAF6. Interacts with IGF1R. Interacts with ENG. Interacts with KIR2DL1, KIR2DL3 and KIR2DL4. Interacts with LDLR. Interacts with AP2B1. Interacts with C5AR1. Interacts with RAF1. Interacts with MAP2K1. Interacts with MAPK1. Interacts with MAPK10; the interaction enhances MAPK10 activation by MAP3K5. Interacts with MAP2K4; the interaction is enhanced by presence of MAP3K5 and MAPK10. Interacts with MAP3K5. Interacts with AKT1. Interacts with IKBKB and MAP3K14. Interacts with SMO (activated). Interacts with GSK3A and GSK3B. Associates with protein phosphatase 2A (PP2A). Interacts with DHX8; the interaction is detected in the nucleus upon OR1D2 stimulation. Interacts with GAPDHS; the interaction is detected in the nucleus upon OR1D2 stimulation. Interacts with H2AFX; the interaction is detected in the nucleus upon OR1D2 stimulation. Interacts with KIF14; the interaction is detected in the nucleus upon OR1D2 stimulation. Interacts with RCC1; the interaction is detected in the nucleus upon OR1D2 stimulation. Interacts with CXCR4; the interaction is dependent on C-terminal phosphorylation of CXCR4 and allows activation of MAPK1 and MAPK3. Interacts with GPR143. Interacts with HCK and CXCR1 (phosphorylated). Interacts with ACKR3 and ACKR4. Interacts with ARRDC1; the interaction is direct. Interacts with GPR61, GPR62 and GPR135. Interacts (via NACHT and LRR domains) with NLRP3; this interaction is direct and inducible by omega-3 polyunsaturated fatty acids (PUFAs). Interacts with FFAR4 (via C-terminus); this interaction is stimulated by long-chain fatty acids (LCFAs). Interacts with GPR35. Interacts with GPR84. Interacts with TIGIT; this interaction inhibits the NF-kappa-B pathway. Interacts with TGFBR3. Post-translationally, phosphorylated at Thr-382 in the cytoplasm; probably dephosphorylated at the plasma membrane. The phosphorylation does not regulate internalization and recycling of ADRB2, interaction with clathrin or AP2B1. The ubiquitination status appears to regulate the formation and trafficking of beta-arrestin-GPCR complexes and signaling. Ubiquitination appears to occur GPCR-specific. Ubiquitinated by MDM2; the ubiquitination is required for rapid internalization of ADRB2. Deubiquitinated by USP33; the deubiquitination leads to a dissociation of the beta-arrestin-GPCR complex. Stimulation of a class A GPCR, such as ADRB2, induces transient ubiquitination and subsequently promotes association with USP33. Stimulation of a class B GPCR promotes a sustained ubiquitination. Deubiquitinated by USP20; allowing USP20 to deubiquitinate TRAF6 leading to inhibition of NF-kappa-B signaling. In terms of processing, hydroxylation by PHD2 modulates the rate of internalization by slowing down recruitment to the plasma membrane and inhibiting subsequent co-internalization with class A receptors.

It localises to the cytoplasm. The protein resides in the nucleus. It is found in the cell membrane. Its subcellular location is the membrane. The protein localises to the clathrin-coated pit. It localises to the cytoplasmic vesicle. Functionally, functions in regulating agonist-mediated G-protein coupled receptor (GPCR) signaling by mediating both receptor desensitization and resensitization processes. During homologous desensitization, beta-arrestins bind to the GPRK-phosphorylated receptor and sterically preclude its coupling to the cognate G-protein; the binding appears to require additional receptor determinants exposed only in the active receptor conformation. The beta-arrestins target many receptors for internalization by acting as endocytic adapters (CLASPs, clathrin-associated sorting proteins) and recruiting the GPRCs to the adapter protein 2 complex 2 (AP-2) in clathrin-coated pits (CCPs). However, the extent of beta-arrestin involvement appears to vary significantly depending on the receptor, agonist and cell type. Internalized arrestin-receptor complexes traffic to intracellular endosomes, where they remain uncoupled from G-proteins. Two different modes of arrestin-mediated internalization occur. Class A receptors, like ADRB2, OPRM1, ENDRA, D1AR and ADRA1B dissociate from beta-arrestin at or near the plasma membrane and undergo rapid recycling. Class B receptors, like AVPR2, AGTR1, NTSR1, TRHR and TACR1 internalize as a complex with arrestin and traffic with it to endosomal vesicles, presumably as desensitized receptors, for extended periods of time. Receptor resensitization then requires that receptor-bound arrestin is removed so that the receptor can be dephosphorylated and returned to the plasma membrane. Mediates endocytosis of CCR7 following ligation of CCL19 but not CCL21. Involved in internalization of P2RY1, P2RY4, P2RY6 and P2RY11 and ATP-stimulated internalization of P2RY2. Involved in phosphorylation-dependent internalization of OPRD1 and subsequent recycling or degradation. Involved in ubiquitination of IGF1R. Beta-arrestins function as multivalent adapter proteins that can switch the GPCR from a G-protein signaling mode that transmits short-lived signals from the plasma membrane via small molecule second messengers and ion channels to a beta-arrestin signaling mode that transmits a distinct set of signals that are initiated as the receptor internalizes and transits the intracellular compartment. Acts as a signaling scaffold for MAPK pathways such as MAPK1/3 (ERK1/2) and MAPK10 (JNK3). ERK1/2 and JNK3 activated by the beta-arrestin scaffold are largely excluded from the nucleus and confined to cytoplasmic locations such as endocytic vesicles, also called beta-arrestin signalosomes. Acts as a signaling scaffold for the AKT1 pathway. GPCRs for which the beta-arrestin-mediated signaling relies on both ARRB1 and ARRB2 (codependent regulation) include ADRB2, F2RL1 and PTH1R. For some GPCRs the beta-arrestin-mediated signaling relies on either ARRB1 or ARRB2 and is inhibited by the other respective beta-arrestin form (reciprocal regulation). Increases ERK1/2 signaling in AGTR1- and AVPR2-mediated activation (reciprocal regulation). Involved in CCR7-mediated ERK1/2 signaling involving ligand CCL19. Is involved in type-1A angiotensin II receptor/AGTR1-mediated ERK activity. Is involved in type-1A angiotensin II receptor/AGTR1-mediated MAPK10 activity. Is involved in dopamine-stimulated AKT1 activity in the striatum by disrupting the association of AKT1 with its negative regulator PP2A. Involved in AGTR1-mediated chemotaxis. Appears to function as signaling scaffold involved in regulation of MIP-1-beta-stimulated CCR5-dependent chemotaxis. Involved in attenuation of NF-kappa-B-dependent transcription in response to GPCR or cytokine stimulation by interacting with and stabilizing CHUK. Suppresses UV-induced NF-kappa-B-dependent activation by interacting with CHUK. The function is promoted by stimulation of ADRB2 and dephosphorylation of ARRB2. Involved in p53/TP53-mediated apoptosis by regulating MDM2 and reducing the MDM2-mediated degradation of p53/TP53. May serve as nuclear messenger for GPCRs. Upon stimulation of OR1D2, may be involved in regulation of gene expression during the early processes of fertilization. Also involved in regulation of receptors other than GPCRs. Involved in endocytosis of TGFBR2 and TGFBR3 and down-regulates TGF-beta signaling such as NF-kappa-B activation. Involved in endocytosis of low-density lipoprotein receptor/LDLR. Involved in endocytosis of smoothened homolog/Smo, which also requires GRK2. Involved in endocytosis of SLC9A5. Involved in endocytosis of ENG and subsequent TGF-beta-mediated ERK activation and migration of epithelial cells. Involved in Toll-like receptor and IL-1 receptor signaling through the interaction with TRAF6 which prevents TRAF6 autoubiquitination and oligomerization required for activation of NF-kappa-B and JUN. Involved in insulin resistance by acting as insulin-induced signaling scaffold for SRC, AKT1 and INSR. Involved in regulation of inhibitory signaling of natural killer cells by recruiting PTPN6 and PTPN11 to KIR2DL1. Involved in IL8-mediated granule release in neutrophils. Involved in the internalization of the atypical chemokine receptor ACKR3. Acts as an adapter protein coupling FFAR4 receptor to specific downstream signaling pathways, as well as mediating receptor endocytosis. During the activation step of NLRP3 inflammasome, directly associates with NLRP3 leading to inhibition of pro-inflammatory cytokine release and inhibition of inflammation. The protein is Beta-arrestin-2 (ARRB2) of Homo sapiens (Human).